Consider the following 92-residue polypeptide: Co-chaperonin GroES (92 aa).

This sequence belongs to the GroES chaperonin family. In terms of assembly, heptamer of 7 subunits arranged in a ring. Interacts with the chaperonin GroEL.

The protein localises to the cytoplasm. Functionally, together with the chaperonin GroEL, plays an essential role in assisting protein folding. The GroEL-GroES system forms a nano-cage that allows encapsulation of the non-native substrate proteins and provides a physical environment optimized to promote and accelerate protein folding. GroES binds to the apical surface of the GroEL ring, thereby capping the opening of the GroEL channel. The polypeptide is Co-chaperonin GroES (Thermotoga petrophila (strain ATCC BAA-488 / DSM 13995 / JCM 10881 / RKU-1)).